The following is a 136-amino-acid chain: Polyadenylate-binding protein-interacting protein 2B (136 aa).

A compositionally biased stretch (polar residues) spans Asn15–Ser25. Disordered regions lie at residues Asn15–Lys40 and Ser107–Tyr136. Residues Lys27 to Lys40 are compositionally biased toward basic and acidic residues.

The protein belongs to the PAIP2 family. As to quaternary structure, interacts (via central acidic portion and C-terminus) with PABPC1 (via the second and third RRM domains and the C-terminus). Ubiquitinated in vitro. In terms of tissue distribution, expressed at very high levels in pancreas, at high levels in testis and at moderately high levels in brain, heart and lung (at protein level).

Its function is as follows. Inhibits translation of capped and polyadenylated mRNAs by displacing PABPC1 from the poly(A) tail. The chain is Polyadenylate-binding protein-interacting protein 2B (Paip2b) from Mus musculus (Mouse).